We begin with the raw amino-acid sequence, 406 residues long: Putative odorant receptor 65b (406 aa).

At 1–55 (MDIQRFLKFYKVGWKTYRDPLMEASHSSIYYWREQMKAMALFTTTEERLLPYRSK) the chain is on the cytoplasmic side. The helical transmembrane segment at 56–76 (WHTLVYIQMVIFFASMSFGLT) threads the bilayer. Topologically, residues 77 to 88 (ESMGDHVQMGRD) are extracellular. The chain crosses the membrane as a helical span at residues 89-109 (LAFILGAFFIIFKTYYFCWYG). At 110–144 (DELDQVISDLDALHPWAQKGPNPVEYQTGKRWYFV) the chain is on the cytoplasmic side. The chain crosses the membrane as a helical span at residues 145–165 (MAFFLATSWSFFLCILLLLLI). At 166-218 (TSPMWVHQQNLPFHAAFPFQWHEKSLHPISHAIIYLFQSYFAVYCLTWLLCIE) the chain is on the extracellular side. Residues 219–239 (GLSICIYAEITFGIEVLCLEL) form a helical membrane-spanning segment. The Cytoplasmic portion of the chain corresponds to 240-275 (RQIHRHNYGLQELRMETNRLVKLHQKIVEILDRTND). The chain crosses the membrane as a helical span at residues 276–296 (VFHGTLIMQMGVNFSLVSLSV). The Extracellular segment spans residues 297-307 (LEAVEARKDPK). A helical transmembrane segment spans residues 308-328 (VVAQFAVLMLLALGHLSMWSY). The Cytoplasmic portion of the chain corresponds to 329–381 (CGDQLSQKSLQISEAAYEAYDPTKGSKDVYRDLCVIIRRGQDPLIMRASPFPS). The helical transmembrane segment at 382–402 (FNLINYSAILNQCYGILTFLL) threads the bilayer. Topologically, residues 403-406 (KTLD) are extracellular.

It belongs to the insect chemoreceptor superfamily. Heteromeric odorant receptor channel (TC 1.A.69) family. Or49a subfamily. In terms of assembly, interacts with Orco. Complexes exist early in the endomembrane system in olfactory sensory neurons (OSNs), coupling these complexes to the conserved ciliary trafficking pathway.

The protein localises to the cell membrane. Functionally, odorant receptor which mediates acceptance or avoidance behavior, depending on its substrates. The odorant receptor repertoire encodes a large collection of odor stimuli that vary widely in identity, intensity, and duration. May form a complex with Orco to form odorant-sensing units, providing sensitive and prolonged odorant signaling and calcium permeability. The chain is Putative odorant receptor 65b (Or65b) from Drosophila melanogaster (Fruit fly).